The primary structure comprises 394 residues: Immune-associated nucleotide-binding protein 12 (394 aa).

The 207-residue stretch at 45–251 (KPARTLLLVG…YMADLSHEIR (207 aa)) folds into the AIG1-type G domain. Residues 54–61 (GRSGNGKS) form a G1 region. GTP-binding positions include 54 to 62 (GRSGNGKSA) and S75. A G2 region spans residues 81 to 85 (GVTTA). The tract at residues 103-106 (DTPG) is G3. A G4 region spans residues 173 to 176 (TNED). The tract at residues 210-212 (RNR) is G5. N211 lines the GTP pocket. Positions 289 to 387 (NQQLRQMMER…KQMATDLQKS (99 aa)) form a coiled coil.

Belongs to the TRAFAC class TrmE-Era-EngA-EngB-Septin-like GTPase superfamily. AIG1/Toc34/Toc159-like paraseptin GTPase family. IAN subfamily.

The polypeptide is Immune-associated nucleotide-binding protein 12 (Arabidopsis thaliana (Mouse-ear cress)).